Consider the following 301-residue polypeptide: Methionyl-tRNA formyltransferase (301 aa).

(6S)-5,6,7,8-tetrahydrofolate is bound at residue 109-112 (SLLP).

Belongs to the Fmt family.

The enzyme catalyses L-methionyl-tRNA(fMet) + (6R)-10-formyltetrahydrofolate = N-formyl-L-methionyl-tRNA(fMet) + (6S)-5,6,7,8-tetrahydrofolate + H(+). Its function is as follows. Attaches a formyl group to the free amino group of methionyl-tRNA(fMet). The formyl group appears to play a dual role in the initiator identity of N-formylmethionyl-tRNA by promoting its recognition by IF2 and preventing the misappropriation of this tRNA by the elongation apparatus. The polypeptide is Methionyl-tRNA formyltransferase (Ruegeria pomeroyi (strain ATCC 700808 / DSM 15171 / DSS-3) (Silicibacter pomeroyi)).